The chain runs to 371 residues: 4-hydroxy-3-methylbut-2-en-1-yl diphosphate synthase (flavodoxin) (371 aa).

[4Fe-4S] cluster is bound by residues Cys-270, Cys-273, Cys-305, and Glu-312.

It belongs to the IspG family. The cofactor is [4Fe-4S] cluster.

The enzyme catalyses (2E)-4-hydroxy-3-methylbut-2-enyl diphosphate + oxidized [flavodoxin] + H2O + 2 H(+) = 2-C-methyl-D-erythritol 2,4-cyclic diphosphate + reduced [flavodoxin]. The protein operates within isoprenoid biosynthesis; isopentenyl diphosphate biosynthesis via DXP pathway; isopentenyl diphosphate from 1-deoxy-D-xylulose 5-phosphate: step 5/6. In terms of biological role, converts 2C-methyl-D-erythritol 2,4-cyclodiphosphate (ME-2,4cPP) into 1-hydroxy-2-methyl-2-(E)-butenyl 4-diphosphate. This is 4-hydroxy-3-methylbut-2-en-1-yl diphosphate synthase (flavodoxin) from Shewanella baltica (strain OS223).